Here is an 878-residue protein sequence, read N- to C-terminus: Aminopeptidase M1-C (878 aa).

The required for membrane association stretch occupies residues 102–209 (LGEGVLAMDF…MSTYLVAIVV (108 aa)). Substrate is bound by residues Glu142 and 275-279 (GAMEN). His311 is a Zn(2+) binding site. The active-site Proton acceptor is the Glu312. Zn(2+) contacts are provided by His315 and Glu334. Positions 726-727 (LL) match the Dileucine internalization motif motif.

This sequence belongs to the peptidase M1 family. As to quaternary structure, homodimer. Requires Zn(2+) as cofactor.

It is found in the membrane. Its subcellular location is the microsome membrane. The protein resides in the cytoplasm. The enzyme catalyses Release of an N-terminal amino acid, Xaa-|-Yaa- from a peptide, amide or arylamide. Xaa is preferably Ala, but may be most amino acids including Pro (slow action). When a terminal hydrophobic residue is followed by a prolyl residue, the two may be released as an intact Xaa-Pro dipeptide.. The protein is Aminopeptidase M1-C of Oryza sativa subsp. japonica (Rice).